Reading from the N-terminus, the 474-residue chain is Trehalose-6-phosphate synthase (474 aa).

Arginine 10 lines the D-glucose 6-phosphate pocket. 22 to 23 (GG) serves as a coordination point for UDP-alpha-D-glucose. The D-glucose 6-phosphate site is built by tyrosine 77 and aspartate 131. 2 residues coordinate UDP-alpha-D-glucose: arginine 263 and lysine 268. Arginine 301 contributes to the D-glucose 6-phosphate binding site. Residues phenylalanine 340 and 366 to 370 (LVAKE) contribute to the UDP-alpha-D-glucose site.

This sequence belongs to the glycosyltransferase 20 family. As to quaternary structure, homotetramer.

The catalysed reaction is D-glucose 6-phosphate + UDP-alpha-D-glucose = alpha,alpha-trehalose 6-phosphate + UDP + H(+). It functions in the pathway glycan biosynthesis; trehalose biosynthesis. Functionally, probably involved in the osmoprotection via the biosynthesis of trehalose. Catalyzes the transfer of glucose from UDP-alpha-D-glucose (UDP-Glc) to D-glucose 6-phosphate (Glc-6-P) to form trehalose-6-phosphate. Acts with retention of the anomeric configuration of the UDP-sugar donor. The chain is Trehalose-6-phosphate synthase from Pseudomonas savastanoi (Pseudomonas syringae pv. savastanoi).